Consider the following 126-residue polypeptide: Large ribosomal subunit protein bL20 (126 aa).

Belongs to the bacterial ribosomal protein bL20 family.

In terms of biological role, binds directly to 23S ribosomal RNA and is necessary for the in vitro assembly process of the 50S ribosomal subunit. It is not involved in the protein synthesizing functions of that subunit. This Parafrankia sp. (strain EAN1pec) protein is Large ribosomal subunit protein bL20.